Here is a 109-residue protein sequence, read N- to C-terminus: Period circadian protein (109 aa).

The segment at 59 to 109 (CFEGSGGSGSSGNFTSGSNLNMRSVTNTSNTGTGTSSESVPLVTLTEALIS) is disordered. Positions 69-98 (SGNFTSGSNLNMRSVTNTSNTGTGTSSESV) are enriched in low complexity.

In terms of assembly, forms a heterodimer with timeless (TIM); the complex then translocates into the nucleus. In terms of processing, phosphorylated with a circadian rhythmicity, probably by the double-time protein (dbt). Phosphorylation could be implicated in the stability of per monomer and in the formation of heterodimer per-tim.

Its subcellular location is the nucleus. The protein localises to the cytoplasm. It localises to the perinuclear region. Essential for biological clock functions. Determines the period length of circadian and ultradian rhythms; an increase in PER dosage leads to shortened circadian rhythms and a decrease leads to lengthened circadian rhythms. Essential for the circadian rhythmicity of locomotor activity, eclosion behavior, and for the rhythmic component of the male courtship song that originates in the thoracic nervous system. The biological cycle depends on the rhythmic formation and nuclear localization of the TIM-PER complex. Light induces the degradation of TIM, which promotes elimination of PER. Nuclear activity of the heterodimer coordinatively regulates PER and TIM transcription through a negative feedback loop. Behaves as a negative element in circadian transcriptional loop. Does not appear to bind DNA, suggesting indirect transcriptional inhibition. The chain is Period circadian protein (per) from Syritta pipiens (Hoverfly).